Consider the following 794-residue polypeptide: DNA ligase (794 aa).

Residues 1–47 are disordered; sequence MEEDLFSLAAGKQPSQQATNETAPRAGEARENAGTDHPGNAEDPAHR. Over residues 13-22 the composition is skewed to polar residues; that stretch reads QPSQQATNET. Residues 27 to 47 show a composition bias toward basic and acidic residues; it reads GEARENAGTDHPGNAEDPAHR. Residues 73–77, 122–123, and E160 each bind NAD(+); these read DAEYD and SI. Residue K162 is the N6-AMP-lysine intermediate of the active site. NAD(+) is bound by residues R183, E219, K335, and K359. Zn(2+)-binding residues include C457, C460, C475, and C480. Residues 717–794 form the BRCT domain; sequence IPAGSLSGKT…EEDFYKMIGN (78 aa).

The protein belongs to the NAD-dependent DNA ligase family. LigA subfamily. It depends on Mg(2+) as a cofactor. Mn(2+) serves as cofactor.

It catalyses the reaction NAD(+) + (deoxyribonucleotide)n-3'-hydroxyl + 5'-phospho-(deoxyribonucleotide)m = (deoxyribonucleotide)n+m + AMP + beta-nicotinamide D-nucleotide.. Its function is as follows. DNA ligase that catalyzes the formation of phosphodiester linkages between 5'-phosphoryl and 3'-hydroxyl groups in double-stranded DNA using NAD as a coenzyme and as the energy source for the reaction. It is essential for DNA replication and repair of damaged DNA. This chain is DNA ligase, found in Akkermansia muciniphila (strain ATCC BAA-835 / DSM 22959 / JCM 33894 / BCRC 81048 / CCUG 64013 / CIP 107961 / Muc).